Consider the following 354-residue polypeptide: Probable L-ascorbate-6-phosphate lactonase UlaG (354 aa).

It belongs to the UlaG family. Requires a divalent metal cation as cofactor.

Its subcellular location is the cytoplasm. It catalyses the reaction L-ascorbate 6-phosphate + H2O = 3-dehydro-L-gulonate 6-phosphate. The protein operates within cofactor degradation; L-ascorbate degradation; D-xylulose 5-phosphate from L-ascorbate: step 1/4. Functionally, probably catalyzes the hydrolysis of L-ascorbate-6-P into 3-keto-L-gulonate-6-P. Is essential for L-ascorbate utilization under anaerobic conditions. This is Probable L-ascorbate-6-phosphate lactonase UlaG from Escherichia coli O139:H28 (strain E24377A / ETEC).